Consider the following 575-residue polypeptide: UvrABC system protein C (575 aa).

The GIY-YIG domain maps to 16 to 94 (SQPGVYRMYD…IKLYQPRYNV (79 aa)). The 36-residue stretch at 204-239 (DQVLTQLISRMETASQNLEFEEAARIRDQIQAVRRV) folds into the UVR domain.

Belongs to the UvrC family. In terms of assembly, interacts with UvrB in an incision complex.

The protein resides in the cytoplasm. The UvrABC repair system catalyzes the recognition and processing of DNA lesions. UvrC both incises the 5' and 3' sides of the lesion. The N-terminal half is responsible for the 3' incision and the C-terminal half is responsible for the 5' incision. The protein is UvrABC system protein C of Shigella dysenteriae serotype 1 (strain Sd197).